The chain runs to 197 residues: ATP-dependent Clp protease proteolytic subunit (197 aa).

S98 functions as the Nucleophile in the catalytic mechanism. Residue H123 is part of the active site.

It belongs to the peptidase S14 family. As to quaternary structure, fourteen ClpP subunits assemble into 2 heptameric rings which stack back to back to give a disk-like structure with a central cavity, resembling the structure of eukaryotic proteasomes.

It localises to the cytoplasm. It carries out the reaction Hydrolysis of proteins to small peptides in the presence of ATP and magnesium. alpha-casein is the usual test substrate. In the absence of ATP, only oligopeptides shorter than five residues are hydrolyzed (such as succinyl-Leu-Tyr-|-NHMec, and Leu-Tyr-Leu-|-Tyr-Trp, in which cleavage of the -Tyr-|-Leu- and -Tyr-|-Trp bonds also occurs).. Its function is as follows. Cleaves peptides in various proteins in a process that requires ATP hydrolysis. Has a chymotrypsin-like activity. Plays a major role in the degradation of misfolded proteins. The sequence is that of ATP-dependent Clp protease proteolytic subunit from Pediococcus pentosaceus (strain ATCC 25745 / CCUG 21536 / LMG 10740 / 183-1w).